Consider the following 842-residue polypeptide: MutS protein homolog him-14 (842 aa).

A disordered region spans residues 1–21; the sequence is MYSNKSFQRRQRQQVAESRSE. An ATP-binding site is contributed by 588–595; sequence GPNMAGKS.

It belongs to the DNA mismatch repair MutS family. Heterooligomer of him-14 and msh-5.

It localises to the nucleus. In terms of biological role, required during the pachytene stage of meiotic prophase for the formation of crossovers between homologous chromosomes. Together with msh-5 and zhp-3 plays a role in the activation of DNA damage-dependent apoptosis at the DNA damage checkpoint in pachytene cells. Not needed for pairing or synapsis. May promote crossing over by interfering with Holliday junction branch migration. Has no apparent role in DNA mismatch repair. This chain is MutS protein homolog him-14, found in Caenorhabditis elegans.